Consider the following 95-residue polypeptide: Envelope glycoprotein N (95 aa).

A signal peptide spans 1-26 (MGLMDIHNAVCSLVIGVAILIATSQA). The Virion surface segment spans residues 27 to 55 (TFVDWGSSITSMGDFWESTCSAVGVSIAF). Residues 56-76 (SSGFSVLFYMGLVAVISALLA) form a helical membrane-spanning segment. Residues 77-95 (GSYHACFRLFTADMFKEEW) lie on the Intravirion side of the membrane.

It belongs to the herpesviridae glycoprotein N family. As to quaternary structure, interacts (via N-terminus) with gM (via N-terminus). The gM-gN heterodimer forms the gCII complex.

Its subcellular location is the virion membrane. It is found in the host membrane. The protein resides in the host Golgi apparatus. The protein localises to the host trans-Golgi network. Functionally, envelope glycoprotein necessary for proper maturation of gM and modulation of its membrane fusion activity. Also plays a critical role in virion morphogenesis. This Gallus gallus (Chicken) protein is Envelope glycoprotein N.